A 424-amino-acid polypeptide reads, in one-letter code: MLEVAISDIQAREILDSRGYPTLYVKVITDAGTFGEACVPSGASTGIKEALELRDHDTSRYQGKGVLQALNNVKEVLLPVVQGVNIFDQILIDSIMVEADGTPNKEKLGANAILGISLAAAKAAAATLGQPFYRYVGGCFSHVLPCPMMNLINGGMHANNGLQFQEFMIRPIGATSIKEAVRMGADVFHTLKKLLNDKNLATGVGDEGGFAPQLKSNSEALDLLVLAIEKSGFQPGKEISLALDCAASSFYDTKTKTYEGKSYQEQVEILADLCDRYPIDSIEDGLAEEDFDGWDLLTAELGDAIQIVGDDLFVTNPELIAEGISKGRANAVLIKPNQIGTLTETSEAIQLAHNQGYTTILSHRSGETEDTTIADLAVAFNTGQIKTGSLSRSERIAKYNRLMAIEEELGPVGLFKDSNPFSGE.

Gln-165 provides a ligand contact to (2R)-2-phosphoglycerate. The active-site Proton donor is Glu-207. Positions 244, 283, and 310 each coordinate Mg(2+). The (2R)-2-phosphoglycerate site is built by Lys-335, Arg-364, Ser-365, and Lys-386. The Proton acceptor role is filled by Lys-335.

This sequence belongs to the enolase family. It depends on Mg(2+) as a cofactor.

It localises to the cytoplasm. Its subcellular location is the secreted. The protein resides in the cell surface. The enzyme catalyses (2R)-2-phosphoglycerate = phosphoenolpyruvate + H2O. The protein operates within carbohydrate degradation; glycolysis; pyruvate from D-glyceraldehyde 3-phosphate: step 4/5. In terms of biological role, catalyzes the reversible conversion of 2-phosphoglycerate (2-PG) into phosphoenolpyruvate (PEP). It is essential for the degradation of carbohydrates via glycolysis. The protein is Enolase of Chlamydia felis (strain Fe/C-56) (Chlamydophila felis).